Here is a 221-residue protein sequence, read N- to C-terminus: MTFFESELSAKKRDQRRGFLFILSSPSGAGKSTLSRLLLKDAQLERSVSVTTRQRRPSEVDGFHYHFVSKQEFECKRDGDEFIEWAEVHGNYYGTLRKSVENALSAGRDILFDIDYQGTEQLQKKMPGDTVSIFILPPSMKELILRLHRRAEDSQDIINLRLKNAQTEMQHWRFYDYVVINKDLNQSASLIKSIYLAETARRKRCSFLESFVDGLIDEKIN.

The 179-residue stretch at 18-196 (GFLFILSSPS…SASLIKSIYL (179 aa)) folds into the Guanylate kinase-like domain. 25-32 (SPSGAGKS) contacts ATP.

It belongs to the guanylate kinase family.

Its subcellular location is the cytoplasm. The catalysed reaction is GMP + ATP = GDP + ADP. Essential for recycling GMP and indirectly, cGMP. The protein is Guanylate kinase of Bartonella quintana (strain Toulouse) (Rochalimaea quintana).